The primary structure comprises 633 residues: Micronuclear linker histone polyprotein (633 aa).

2 consecutive DNA-binding regions (HMG box) follow at residues 12 to 74 (PPKK…LFHY) and 96 to 164 (PKKP…KKWN). The disordered stretch occupies residues 170-633 (AAQKKQTKRK…AYGKKANKKQ (464 aa)). A compositionally biased stretch (basic residues) spans 174 to 190 (KQTKRKNSTSKSRRSSS). 2 stretches are compositionally biased toward low complexity: residues 212–224 (SSAS…SSSS) and 253–271 (NSTS…SSSS). 2 stretches are compositionally biased toward basic residues: residues 272 to 309 (KNKK…RKSS) and 330 to 352 (SNKR…RKSS). Composition is skewed to basic and acidic residues over residues 353–374 (KSQE…EGQK) and 382–401 (AKRD…EART). The segment covering 406 to 416 (NKSASKASKSG) has biased composition (low complexity). Residues 417-444 (SKSKGKSASKSKGKSSSKGKNSKSRSAS) are compositionally biased toward basic residues. The span at 446–469 (PKSNAAQNSNNTHQTADSSENASS) shows a compositional bias: polar residues. Over residues 478-491 (RQREQKDMVNEKSN) the composition is skewed to basic and acidic residues. Residues 496–524 (SKGKKNSKSNTRSKSKSKSASKSRKNASK) are compositionally biased toward basic residues. Basic and acidic residues-rich tracts occupy residues 540–550 (SRSESKSKSEA) and 559–612 (EVIE…EDSK).

In terms of processing, all four histones are processed from the precursor molecule. Post-translationally, phosphorylated in growing and dividing cells but not in nongrowing (starved) cells. The N-terminus of MIC LH-alpha and MIC LH-delta is blocked.

It localises to the nucleus. The protein resides in the chromosome. The sequence is that of Micronuclear linker histone polyprotein (MLH) from Tetrahymena thermophila (strain SB210).